We begin with the raw amino-acid sequence, 244 residues long: Heat stress transcription factor B-3 (244 aa).

Residues 38 to 132 mediate DNA binding; sequence PPPFLVKTYK…LMSNIRRRKS (95 aa). Residues 173–218 form a hydrophobic repeat HR-A/B region; that stretch reads TSSSFVYTALLDENKCLKNENELLSCELGKTKKKCKQLMELVERYR. The Nuclear localization signal signature appears at 202–208; that stretch reads KTKKKCK. Residues 216 to 244 form a disordered region; the sequence is RYRGEDEDATDESDDEEDEGLKLFGVKLE. The span at 220 to 234 shows a compositional bias: acidic residues; the sequence is EDEDATDESDDEEDE. The Nuclear export signal motif lies at 236-243; that stretch reads LKLFGVKL.

Belongs to the HSF family. Class B subfamily. Homotrimer. Exhibits temperature-dependent phosphorylation.

The protein resides in the cytoplasm. It is found in the nucleus. Functionally, transcriptional regulator that specifically binds DNA sequence 5'-AGAAnnTTCT-3' known as heat shock promoter elements (HSE). The sequence is that of Heat stress transcription factor B-3 (HSFB3) from Arabidopsis thaliana (Mouse-ear cress).